The following is a 98-amino-acid chain: Large ribosomal subunit protein bL27 (98 aa).

The propeptide occupies 1–10 (MELKMNLQLF). Residues 11–30 (AQKKGTGSSKNGRDSISKRL) are disordered.

It belongs to the bacterial ribosomal protein bL27 family. Post-translationally, the N-terminus is cleaved by ribosomal processing cysteine protease Prp.

The protein is Large ribosomal subunit protein bL27 of Natranaerobius thermophilus (strain ATCC BAA-1301 / DSM 18059 / JW/NM-WN-LF).